A 491-amino-acid chain; its full sequence is Allene oxide synthase 3 (491 aa).

Heme b is bound by residues lysine 104, histidine 135, and lysine 139. The (13S)-hydroperoxy-(9Z,11E)-octadecadienoate site is built by asparagine 296 and lysine 302. Asparagine 296 is a binding site for (13S)-hydroperoxy-(9Z,11E,15Z)-octadecatrienoate. Lysine 442 and cysteine 444 together coordinate heme b.

This sequence belongs to the cytochrome P450 family. Heme b is required as a cofactor. As to expression, expressed in roots. Not detected in aerial tissues, including cotyledons, leaves, stems and flower buds.

It carries out the reaction (13S)-hydroperoxy-(9Z,11E,15Z)-octadecatrienoate = (9Z,13S,15Z)-12,13-epoxyoctadeca-9,11,15-trienoate + H2O. The enzyme catalyses (13S)-hydroperoxy-(9Z,11E)-octadecadienoate = (9Z,13S)-12,13-epoxyoctadeca-9,11-dienoate + H2O. The catalysed reaction is (9Z,13S,15Z)-12,13-epoxyoctadeca-9,11,15-trienoate = (9S,13S,15Z)-12-oxophyto-10,15-dienoate. Cytochrome P450 metabolizing both 13- and 9-hydroperoxides of linoleic and linolenic acids, but with a marked preference for 9-hydroperoxy fatty acids. Catalyzes not only the synthesis of allene oxide, but also its hydrolysis and cyclization. The first step is the synthesis of (12Z)-9,10-epoxyoctadeca-10,12-dienoic acid (9,10-EOD) and the final products are (9R)-alpha-ketol and the racemic cis-10-oxo-11-phytoenoic acid. The cyclase activity possesses regiospecificity and (9Z)-12,13-epoxyoctadeca-9,11-dienoic acid (12,13-EOD) is significantly less efficient as a substrate for cyclopentenone production than 9,10-EOD. Has no hydroperoxide lyase activity. May play a defensive role against soil-borne pests that affect roots or juvenile tissues as they emerge from the germinating seed. The protein is Allene oxide synthase 3 of Solanum lycopersicum (Tomato).